A 685-amino-acid polypeptide reads, in one-letter code: Acetate--CoA ligase [ADP-forming] I (685 aa).

The region spanning 477 to 513 is the ATP-grasp domain; it reads LPVLEAYGIEVAPYGIARNVDEARDIAESIGYPVVLK. 503-514 is an ATP binding site; it reads AESIGYPVVLKV.

This sequence in the N-terminal section; belongs to the acetate CoA ligase alpha subunit family. In the C-terminal section; belongs to the acetate CoA ligase beta subunit family. In terms of assembly, homodimer.

The enzyme catalyses acetate + ATP + CoA = acetyl-CoA + ADP + phosphate. Its activity is regulated as follows. Activity requires divalent metal cations. In terms of biological role, catalyzes the reversible formation of acetate and ATP from acetyl-CoA by using ADP and phosphate. Can use other substrates such as propionyl-CoA and butyryl-CoA, but not phenylacetyl-CoA. Seems to be involved primarily in the conversion of acetyl-CoA to acetate. Participates in the degradation of branched-chain amino acids via branched-chain-acyl-CoA esters. This chain is Acetate--CoA ligase [ADP-forming] I, found in Archaeoglobus fulgidus (strain ATCC 49558 / DSM 4304 / JCM 9628 / NBRC 100126 / VC-16).